The chain runs to 768 residues: MEINEEAMAAHKRAFLDFLDQDVGKGVYMQAVRDMVQNKRHRLIIGMDDLRNHNLDLARRVIRTPGEYMQPASDAVSEVARNLDPKFLKEGERVMVGFSGPFGFHRVTPRDLMSSFIGTMVCVEGIVTKCSLVRPKVVKSVHFCPVTGDFLSREYRDITSFVGLPTGSVYPTRDDNGNLLVTEYGMCEYKDHQTLSMQEVPENSAPGQLPRTVDVIVEDDLVDCCKPGDRVSIVGVYKALPGKSKGSVSGVFRTVLIANNVSLLNKEANAPVYTREDLKRMKEISRRNDTFDLLGNSLAPSIYGHLWIKKAVVLLMLGGVEKNLKNGTHLRGDINMMMVGDPSVAKSQLLRAVMNIAPLAISTTGRGSSGVGLTAAVTSDQETGERRLEAGAMVLADRGVVCIDEFDKMNDQDRVAIHEVMEQQTVTIAKAGIHASLNARCSVIAAANPIYGTYDRSLTPTKNIGLPDSLLSRFDLLFIVLDQMDPEIDRQISEHVARMHRYCTDDGGARSLDKEGYAEEDDGDANAAIFVKYDRMLHGQDRRRGKKSKQDRLTVKFLKKYIHYAKNLIQPRLTDEASDHIATSYAELRDGSANAKSGGGTLPITARTLETIIRLSTAHAKMKLRHEVLKSDVEAALQVLNFAIYHKELTEMEEREQREMEMKQQADHDAGATGGTVDGHGSSGNDPMDVDVGSNDQNVSAERIQAFEALLGQHVLANHIDQMSIDEIEQMVNRESTAPYTRSQVEFILERMQDANRVMIRDGVVRII.

Positions 290 to 497 (TFDLLGNSLA…IDRQISEHVA (208 aa)) constitute an MCM domain. 340–347 (GDPSVAKS) lines the ATP pocket. The short motif at 472–475 (SRFD) is the Arginine finger element. Positions 661–670 (EMKQQADHDA) are enriched in basic and acidic residues. Residues 661–690 (EMKQQADHDAGATGGTVDGHGSSGNDPMDV) form a disordered region. The span at 672–682 (ATGGTVDGHGS) shows a compositional bias: gly residues.

The protein belongs to the MCM family.

Its subcellular location is the nucleus. The enzyme catalyses ATP + H2O = ADP + phosphate + H(+). Acts as a factor that allows the DNA to undergo a single round of replication per cell cycle. Required for DNA replication and cell proliferation. May act as a component of the MCM complex which is the putative replicative helicase of the replication licensing system in eukaryotic cells. The chain is DNA replication licensing factor MCM3 homolog 3 (ROA3) from Zea mays (Maize).